The primary structure comprises 393 residues: Neuroplastin (393 aa).

The N-terminal stretch at 1 to 28 (MSGSSLPGALALSLLLVSGSLLPGPGAA) is a signal peptide. Ig-like domains lie at 29-134 (QNAG…PSIT), 148-234 (PRIV…IEVK), and 237-327 (PDIT…ASVS). At 29–338 (QNAGFVKSPM…VLRVRSHLAP (310 aa)) the chain is on the extracellular side. Cys52 and Cys116 form a disulfide bridge. The interval 149–161 (RIVTSEEVIIRDS) is narpin; mediates binding with FGFR1 and has antidepressant-like activity. Cys169 and Cys217 are oxidised to a cystine. Asn170, Asn196, Asn228, Asn283, Asn295, and Asn316 each carry an N-linked (GlcNAc...) asparagine glycan. A disulfide bond links Cys258 and Cys315. The helical transmembrane segment at 339-359 (LWPFLGILAEIIILVVIIVVY) threads the bilayer. Topologically, residues 360–393 (EKRKRPDEVPDAGPMKTNSTNNHKDKNLRQRNTN) are cytoplasmic. The interval 366–393 (DEVPDAGPMKTNSTNNHKDKNLRQRNTN) is disordered.

As to quaternary structure, interacts with ATP2B1; this interaction stabilizes ATP2B1 and increases ATPase activity; this interaction controls T cell calcium homeostasis following T cell activation. Interacts with XKR8; promoting its localization at the cell membrane. Isoform 1 and isoform 2 are N-glycosylated. In terms of tissue distribution, isoform 1 is ubiquitously expressed. Isoform 2 is brain-specific. In brain isoform 2 is highly expressed in hippocampus and cerebral cortex and weakly in cerebellum and lower brain regions. In the hippocampus isoform 2 is found in the dentate gyrus and CA1-CA4, the striatum oriens of CA3 shows the higher level.

The protein resides in the cell membrane. Its subcellular location is the postsynaptic density. Functionally, probable homophilic and heterophilic cell adhesion molecule involved in long term potentiation at hippocampal excitatory synapses through activation of p38MAPK. May also regulate neurite outgrowth by activating the FGFR1 signaling pathway. May play a role in synaptic plasticity. Also acts as a chaperone for ATP2B1; stabilizes ATP2B1 and increases its ATPase activity. Promotes localization of XKR8 at the cell membrane. The chain is Neuroplastin (Nptn) from Rattus norvegicus (Rat).